An 83-amino-acid polypeptide reads, in one-letter code: U20-theraphotoxin-Cg1a 1 (83 aa).

Positions 1–21 (MKVSVLITLAVLGVMFVWTSA) are cleaved as a signal peptide. Residues 22–47 (AELEERGSDQPAWLKSLERIFQSEER) constitute a propeptide that is removed on maturation. Cystine bridges form between cysteine 49-cysteine 63, cysteine 56-cysteine 68, and cysteine 62-cysteine 76.

Belongs to the neurotoxin 10 (Hwtx-1) family. 40 (Jztx-35) subfamily. As to expression, expressed by the venom gland.

The protein resides in the secreted. Its function is as follows. Probable ion channel inhibitor. This Chilobrachys guangxiensis (Chinese earth tiger tarantula) protein is U20-theraphotoxin-Cg1a 1.